Reading from the N-terminus, the 475-residue chain is UDP-N-acetylmuramate--L-alanine ligase (475 aa).

114-120 (GTHGKTT) serves as a coordination point for ATP.

Belongs to the MurCDEF family.

The protein resides in the cytoplasm. It carries out the reaction UDP-N-acetyl-alpha-D-muramate + L-alanine + ATP = UDP-N-acetyl-alpha-D-muramoyl-L-alanine + ADP + phosphate + H(+). It functions in the pathway cell wall biogenesis; peptidoglycan biosynthesis. Functionally, cell wall formation. The sequence is that of UDP-N-acetylmuramate--L-alanine ligase from Bartonella tribocorum (strain CIP 105476 / IBS 506).